A 115-amino-acid polypeptide reads, in one-letter code: Large ribosomal subunit protein bL19 (115 aa).

Belongs to the bacterial ribosomal protein bL19 family.

Its function is as follows. This protein is located at the 30S-50S ribosomal subunit interface and may play a role in the structure and function of the aminoacyl-tRNA binding site. This chain is Large ribosomal subunit protein bL19, found in Desulforudis audaxviator (strain MP104C).